The sequence spans 178 residues: Conodipine-P2 (178 aa).

The signal sequence occupies residues 1-24 (MKLLAPVLWAMAALGVTWLVAVDS). 4-hydroxyproline occurs at positions 38, 42, and 49. The active site involves histidine 54. A propeptide spans 98–130 (KREVTSHRATSIAHSRLWKTALDQKSFLNRKAR) (interchain peptide). Glutamine 131 bears the Pyrrolidone carboxylic acid mark. Proline 137 carries the post-translational modification 4-hydroxyproline.

This sequence belongs to the phospholipase A2 family. Group IX subfamily. In terms of assembly, heterodimer of an alpha and a beta chain; probably disulfide-linked. The cofactor is Ca(2+). Expressed by the venom duct.

It localises to the secreted. The enzyme catalyses a 1,2-diacyl-sn-glycero-3-phosphocholine + H2O = a 1-acyl-sn-glycero-3-phosphocholine + a fatty acid + H(+). In terms of biological role, catalyzes the calcium-dependent hydrolysis of the 2-acyl groups in 3-sn-phosphoglycerides. This is Conodipine-P2 from Conus purpurascens (Purple cone).